Here is a 200-residue protein sequence, read N- to C-terminus: Probable GTP-binding protein EngB (200 aa).

The EngB-type G domain occupies 22 to 197; the sequence is NLPEYAFIGR…LDYIDSINRS (176 aa). GTP is bound by residues 30-37, 57-61, 75-78, 142-145, and 173-178; these read GRSNVGKS, GKTLL, DLPG, TKAD, and HFVSSS. Residues Ser37 and Thr59 each coordinate Mg(2+).

It belongs to the TRAFAC class TrmE-Era-EngA-EngB-Septin-like GTPase superfamily. EngB GTPase family. The cofactor is Mg(2+).

Necessary for normal cell division and for the maintenance of normal septation. This chain is Probable GTP-binding protein EngB, found in Phocaeicola vulgatus (strain ATCC 8482 / DSM 1447 / JCM 5826 / CCUG 4940 / NBRC 14291 / NCTC 11154) (Bacteroides vulgatus).